We begin with the raw amino-acid sequence, 472 residues long: WASH complex subunit 1 (472 aa).

Residues 1-51 (MPQNRSVESQAYSLPLILPDLRREEAIHQITDTLQHLQTVSNDIFSRILQR) form a required for WASH complex assembly region. Disordered regions lie at residues 294 to 411 (DRQD…GGDL) and 429 to 472 (KVPA…DWES). The span at 301–334 (LPPPPPPPPPPPPPPPPEPSALSPPAPPPPPLSI) shows a compositional bias: pro residues. The segment at 352 to 472 (QGAPKEVVNP…GDGDEDDWES (121 aa)) is VCA. The WH2 domain occupies 364-386 (GRASLLESIRQAGGIGKANLRNV). A compositionally biased stretch (basic and acidic residues) spans 385–400 (NVKEKKLEKKKMKEQE).

Belongs to the WASH1 family. In terms of assembly, component of the WASH complex.

The protein localises to the early endosome membrane. It localises to the recycling endosome membrane. Functionally, acts as a nucleation-promoting factor at the surface of endosomes, where it recruits and activates the Arp2/3 complex to induce actin polymerization, playing a key role in the fission of tubules that serve as transport intermediates during endosome sorting. The sequence is that of WASH complex subunit 1 from Xenopus laevis (African clawed frog).